The following is a 165-amino-acid chain: Nucleotide-binding protein Ccur92_01650 (165 aa).

The protein belongs to the YajQ family.

Functionally, nucleotide-binding protein. The sequence is that of Nucleotide-binding protein Ccur92_01650 from Campylobacter curvus (strain 525.92).